Consider the following 181-residue polypeptide: MALRPAKIDRYVDKPAYTRREYIRGAPGPKITIFDMGNPAGDFEFEVALHVSQPVQIRQNALEAARQQVNRYLQKNVGRSNYHFKIRVYPFQVLRENPMATGRKADRYGNGMRRPFGKPIGLAARLKKDQKVLSIRVNRQHLKFAIEGARRAAMKFPVKCYYRIYDKEGNDVTTKILSQGL.

This sequence belongs to the universal ribosomal protein uL16 family.

In Pyrococcus abyssi (strain GE5 / Orsay), this protein is Large ribosomal subunit protein uL16.